We begin with the raw amino-acid sequence, 357 residues long: Dehydrogenase FUB6 (357 aa).

The segment covering 1-17 (MGGEVSNKTWVFKQSPS) has biased composition (polar residues). A disordered region spans residues 1–22 (MGGEVSNKTWVFKQSPSGLPEP).

Belongs to the zinc-containing alcohol dehydrogenase family. Quinone oxidoreductase subfamily.

It participates in mycotoxin biosynthesis. Functionally, dehydrogenase; part of the gene cluster that mediates the biosynthesis of fusaric acid, a mycotoxin with low to moderate toxicity to animals and humans, but with high phytotoxic properties. L-aspartate is suggested as fusaric acid amino acid precursor that is activated and further processed to O-acetyl-L-homoserine by cluster enzymes aspartate kinase FUB3 and homoserine O-acetyltransferase FUB5, as well as enzymes of the primary metabolism. The polyketide synthase (PKS) FUB1 generates the triketide trans-2-hexenal which is presumptively released by the hydrolase FUB4 and linked to the NRPS-bound amino acid precursor by NAD(P)-dependent dehydrogenase FUB6. FUB1, FUB4, and the non-canonical NRPS Fub8 may form an enzyme complex. Further processing of the NRPS-bound intermediate might be carried out by FUB6 and the O-acetylhomoserine FUB7, enabling a spontaneous electrocyclization to close the carbon backbone of fusaric acid. Dihydrofusaric acid is likely to be released via reduction by the thioester reductase (TR) domain of FUB8 whereupon the final oxidation to fusaric acid may (also) be performed by the FMN-dependent dehydrogenase FUB9. The chain is Dehydrogenase FUB6 from Fusarium oxysporum f. sp. lycopersici (strain 4287 / CBS 123668 / FGSC 9935 / NRRL 34936) (Fusarium vascular wilt of tomato).